The chain runs to 219 residues: Probable glutathione S-transferase GSTF1 (219 aa).

In terms of domain architecture, GST N-terminal spans 2 to 83 (TPVKVFGPAQ…YILRKYKTRE (82 aa)). Glutathione contacts are provided by residues S12, 41 to 42 (HK), 54 to 55 (QI), and 67 to 68 (ES). Residues 91-219 (NLREAAMVDV…LAAVMAPQGA (129 aa)) form the GST C-terminal domain.

This sequence belongs to the GST superfamily. Phi family. In terms of tissue distribution, constitutively expressed in roots.

It catalyses the reaction RX + glutathione = an S-substituted glutathione + a halide anion + H(+). Conjugation of reduced glutathione to a wide number of exogenous and endogenous hydrophobic electrophiles. This Oryza sativa subsp. japonica (Rice) protein is Probable glutathione S-transferase GSTF1 (GSTF1).